The following is a 229-amino-acid chain: GTP cyclohydrolase 1 (229 aa).

The tract at residues 1–26 (MDAKIKPLRGGKPADARPEFQPAELD) is disordered. The Zn(2+) site is built by cysteine 118, histidine 121, and cysteine 189.

It belongs to the GTP cyclohydrolase I family. In terms of assembly, toroid-shaped homodecamer, composed of two pentamers of five dimers.

The catalysed reaction is GTP + H2O = 7,8-dihydroneopterin 3'-triphosphate + formate + H(+). It functions in the pathway cofactor biosynthesis; 7,8-dihydroneopterin triphosphate biosynthesis; 7,8-dihydroneopterin triphosphate from GTP: step 1/1. This chain is GTP cyclohydrolase 1, found in Rhodopseudomonas palustris (strain BisB5).